The sequence spans 338 residues: Peptidoglycan deacetylase-like protein FGM2 (338 aa).

Residues D49, H124, and H128 each contribute to the Zn(2+) site. In terms of domain architecture, NodB homology spans 65–257 (LSDYSAGIFA…VTNSHGFVSS (193 aa)).

Belongs to the polysaccharide deacetylase family.

Its function is as follows. Peptidoglycan deacetylase-like protein; part of the Fg3_54/C64 gene cluster that mediates the biosynthesis of the octapeptide fusaoctaxin A, a virulence factor that is required for cell-to-cell invasiveness of plant host. The 2 nonribosomal peptide synthetases NRPS9 and NRPS5 form an assembly line which likely utilizes GABA as a starter unit (loaded on the unique module M1 of NRPS9) and sequentially incorporates seven extender units composed of the residues L-Ala, L-allo-Ile, L-Ser, L-Val, L-Ser, L-Leu and L-Leu, respectively. During the process, each of the residues that are tethered on modules M3-M7 of NRPS5 containing an E domain can undergo an epimerization reaction to produce a D-configuration before the transpeptidation reaction occurs. The elongation of the peptidyl chain might be terminated by module M8-mediated L-Leu incorporation, followed by R domain-catalyzed 4 electron reduction to release the resulting octapeptide from the assembly line as an alcohol. Fusaoctaxin A is cleaved by the cluster specific ABC transporter FGM5 to the pentapeptide fusapentaxin A and the tripeptide fusatrixin A. The other enzymes from the cluster, FGM1, FGM2, FGM3 and FGM9 seem not to be involved in the biosynthesis of fusaoctaxin A and their functions have still to be determined. This Gibberella zeae (strain ATCC MYA-4620 / CBS 123657 / FGSC 9075 / NRRL 31084 / PH-1) (Wheat head blight fungus) protein is Peptidoglycan deacetylase-like protein FGM2.